Reading from the N-terminus, the 447-residue chain is Alkylglycerol monooxygenase (447 aa).

Transmembrane regions (helical) follow at residues 43–63 (ATPF…ILKG) and 111–131 (WDST…YYWF). A Fatty acid hydroxylase domain is found at 119 to 249 (FTFLGVDFGY…LIIWDRIFGT (131 aa)). A Histidine box-1 motif is present at residues 132 to 136 (HRMAH). Positions 145–149 (HQAHH) match the Histidine box-2 motif. A helical membrane pass occupies residues 170–190 (SWVFYCPLALFIPPSVFAVHI). Residues 221-225 (HRVHH) carry the Histidine box-3 motif. The next 3 membrane-spanning stretches (helical) occupy residues 340-360 (VLQF…TAVL), 363-383 (VTLL…GFLL), and 413-433 (IPSL…FWGV).

The protein belongs to the sterol desaturase family. TMEM195 subfamily. The cofactor is Fe cation. In terms of tissue distribution, highly expressed in lever and small intestine.

The protein resides in the endoplasmic reticulum membrane. The enzyme catalyses 1-O-(1,2-saturated-alkyl)-sn-glycerol + (6R)-L-erythro-5,6,7,8-tetrahydrobiopterin + O2 = a 1-(1-hydroxyalkyl)-sn-glycerol + (6R)-L-erythro-6,7-dihydrobiopterin + H2O. Its function is as follows. Glyceryl-ether monooxygenase that cleaves the O-alkyl bond of ether lipids. Ether lipids are essential components of brain membranes. This chain is Alkylglycerol monooxygenase (Agmo), found in Mus musculus (Mouse).